The chain runs to 394 residues: Nicotinate phosphoribosyltransferase (394 aa).

Residue histidine 218 is modified to Phosphohistidine; by autocatalysis.

This sequence belongs to the NAPRTase family. In terms of processing, transiently phosphorylated on a His residue during the reaction cycle. Phosphorylation strongly increases the affinity for substrates and increases the rate of nicotinate D-ribonucleotide production. Dephosphorylation regenerates the low-affinity form of the enzyme, leading to product release.

The catalysed reaction is nicotinate + 5-phospho-alpha-D-ribose 1-diphosphate + ATP + H2O = nicotinate beta-D-ribonucleotide + ADP + phosphate + diphosphate. Its pathway is cofactor biosynthesis; NAD(+) biosynthesis; nicotinate D-ribonucleotide from nicotinate: step 1/1. In terms of biological role, catalyzes the synthesis of beta-nicotinate D-ribonucleotide from nicotinate and 5-phospho-D-ribose 1-phosphate at the expense of ATP. In Xylella fastidiosa (strain 9a5c), this protein is Nicotinate phosphoribosyltransferase.